We begin with the raw amino-acid sequence, 199 residues long: Putative HMP/thiamine permease protein YkoE (199 aa).

6 helical membrane-spanning segments follow: residues 9–29 (IVIM…FTHF), 40–60 (IAYE…AYMI), 63–83 (PGAA…LGNP), 85–105 (GPMV…VFLA), 114–134 (PVLM…DLFV), and 143–163 (GYLL…AGLL).

In terms of assembly, the complex is composed of two ATP-binding proteins (YkoD), two transmembrane proteins (YkoC and YkoE) and a solute-binding protein (YkoF).

It is found in the cell membrane. In terms of biological role, part of the ABC transporter complex YkoCDEF that could transport hydroxymethylpyrimidine (HMP) and/or thiamine. Could also transport other HMP-containing products. Probably responsible for the translocation of the substrate across the membrane. The protein is Putative HMP/thiamine permease protein YkoE (ykoE) of Bacillus subtilis (strain 168).